The sequence spans 188 residues: MITSNDFKNGMTIEVDGEVYSIVEFQHVKPGKGAAFVRTKLRHMKSGNVSEKTFRAGEKVKRAHLEEREMQFLYAAGDMYNFMDTESFEQYTLTKDQLEDKTQFIKENMIITVLFHNGEEISIELPVFVELAVSETEPGVKGDTASGGSKPATLETGATVNVPFFINEGDIIKVDTRTSEYIERVKGE.

The protein belongs to the elongation factor P family.

The protein resides in the cytoplasm. It functions in the pathway protein biosynthesis; polypeptide chain elongation. Functionally, involved in peptide bond synthesis. Stimulates efficient translation and peptide-bond synthesis on native or reconstituted 70S ribosomes in vitro. Probably functions indirectly by altering the affinity of the ribosome for aminoacyl-tRNA, thus increasing their reactivity as acceptors for peptidyl transferase. This Natranaerobius thermophilus (strain ATCC BAA-1301 / DSM 18059 / JW/NM-WN-LF) protein is Elongation factor P.